A 37-amino-acid chain; its full sequence is Large ribosomal subunit protein bL36 (37 aa).

Belongs to the bacterial ribosomal protein bL36 family.

The sequence is that of Large ribosomal subunit protein bL36 from Nocardia farcinica (strain IFM 10152).